Here is a 275-residue protein sequence, read N- to C-terminus: Large ribosomal subunit protein uL2 (275 aa).

2 disordered regions span residues 38–59 and 223–275; these read TRGS…GGHK and VAMN…RKRK. Residues 50–59 show a composition bias toward basic residues; the sequence is TVRHRGGGHK. Residues 229–244 show a composition bias toward basic and acidic residues; sequence DHPHGGGEGRTGEARE.

This sequence belongs to the universal ribosomal protein uL2 family. Part of the 50S ribosomal subunit. Forms a bridge to the 30S subunit in the 70S ribosome.

One of the primary rRNA binding proteins. Required for association of the 30S and 50S subunits to form the 70S ribosome, for tRNA binding and peptide bond formation. It has been suggested to have peptidyltransferase activity; this is somewhat controversial. Makes several contacts with the 16S rRNA in the 70S ribosome. In Bordetella bronchiseptica (strain ATCC BAA-588 / NCTC 13252 / RB50) (Alcaligenes bronchisepticus), this protein is Large ribosomal subunit protein uL2.